The sequence spans 573 residues: Proline--tRNA ligase (573 aa).

It belongs to the class-II aminoacyl-tRNA synthetase family. ProS type 1 subfamily. Homodimer.

Its subcellular location is the cytoplasm. The catalysed reaction is tRNA(Pro) + L-proline + ATP = L-prolyl-tRNA(Pro) + AMP + diphosphate. Catalyzes the attachment of proline to tRNA(Pro) in a two-step reaction: proline is first activated by ATP to form Pro-AMP and then transferred to the acceptor end of tRNA(Pro). As ProRS can inadvertently accommodate and process non-cognate amino acids such as alanine and cysteine, to avoid such errors it has two additional distinct editing activities against alanine. One activity is designated as 'pretransfer' editing and involves the tRNA(Pro)-independent hydrolysis of activated Ala-AMP. The other activity is designated 'posttransfer' editing and involves deacylation of mischarged Ala-tRNA(Pro). The misacylated Cys-tRNA(Pro) is not edited by ProRS. This is Proline--tRNA ligase from Citrifermentans bemidjiense (strain ATCC BAA-1014 / DSM 16622 / JCM 12645 / Bem) (Geobacter bemidjiensis).